The following is a 239-amino-acid chain: MELNAKPRKSQEKLAEGLIPAVAYNKDNNISFALDRKAFDRAFRQQSTTGLFDITVEGGETFPALVKTVQMDKRRRTPIHVDFYMVTYGEPIEVSVPVHTTGKSQGEIMGGLVDIVLHNLSIVAPGPRRIPQELTVDVSRLNIGDHITAGDVKLPEGCTLAVAADSVVISVLPPRMTADEAAAETQAAQVAGLVAAGELSEEAAAAVLEGDASIEEIKAEAHAAEGTQAEGSTEEGQQQ.

Positions 217 to 239 (IKAEAHAAEGTQAEGSTEEGQQQ) are disordered. Residues 229–239 (AEGSTEEGQQQ) are compositionally biased toward polar residues.

It belongs to the bacterial ribosomal protein bL25 family. CTC subfamily. As to quaternary structure, part of the 50S ribosomal subunit; part of the 5S rRNA/L5/L18/L25 subcomplex. Contacts the 5S rRNA. Binds to the 5S rRNA independently of L5 and L18.

Its function is as follows. This is one of the proteins that binds to the 5S RNA in the ribosome where it forms part of the central protuberance. In Deinococcus deserti (strain DSM 17065 / CIP 109153 / LMG 22923 / VCD115), this protein is Large ribosomal subunit protein bL25.